The sequence spans 525 residues: uncharacterized protein (525 aa).

The segment at residues 21-48 is a DNA-binding region (zn(2)-C6 fungal-type); sequence CLICRSMRKKCDEVHPQCGRCLKAGKQC.

It localises to the cytoplasm. The protein resides in the nucleus. This is an uncharacterized protein from Schizosaccharomyces pombe (strain 972 / ATCC 24843) (Fission yeast).